A 64-amino-acid polypeptide reads, in one-letter code: MPKMKTNRAAAKRFKVTAKGGIKSANAYTSHRFHGKTKKQRRNLRGTRMMNETTIKTYHELLQK.

Belongs to the bacterial ribosomal protein bL35 family.

This chain is Large ribosomal subunit protein bL35, found in Levilactobacillus brevis (strain ATCC 367 / BCRC 12310 / CIP 105137 / JCM 1170 / LMG 11437 / NCIMB 947 / NCTC 947) (Lactobacillus brevis).